Here is a 129-residue protein sequence, read N- to C-terminus: Small ribosomal subunit protein uS11 (129 aa).

It belongs to the universal ribosomal protein uS11 family. As to quaternary structure, part of the 30S ribosomal subunit. Interacts with proteins S7 and S18. Binds to IF-3.

Located on the platform of the 30S subunit, it bridges several disparate RNA helices of the 16S rRNA. Forms part of the Shine-Dalgarno cleft in the 70S ribosome. This Staphylococcus epidermidis (strain ATCC 12228 / FDA PCI 1200) protein is Small ribosomal subunit protein uS11.